Here is a 39-residue protein sequence, read N- to C-terminus: Omega-theraphotoxin-Asp1g (39 aa).

3 cysteine pairs are disulfide-bonded: Cys-4–Cys-25, Cys-8–Cys-31, and Cys-17–Cys-36.

It belongs to the neurotoxin 12 (Hwtx-2) family. 06 (TXP1) subfamily. As to expression, expressed by the venom gland.

It localises to the secreted. In terms of biological role, inhibits voltage-gated calcium channels (Cav) in rat cerebellar granule cells. Has insecticidal activity. This chain is Omega-theraphotoxin-Asp1g, found in Aphonopelma sp. (American tarantula).